The following is a 396-amino-acid chain: MIQTKDIIELTDTYGANNYHPLPIVISKAEGVWVEDPEGNRYMDLLSAYSAVNQGHRHPKIINALIDQANRVTLTSRAFHSDQLGPWYEKVAKLTNKEMVLPMNTGAEAVETAIKTARRWAYDVKKVEANRAEIIVCEDNFHGRTMGAVSMSSNEEYKRGFGPMLPGIVVIPYGDLEALKAAITPNTAAFILEPIQGEAGINIPPAGFLKEALEVCKKENVLFVADEIQTGLGRTGKVFACDWDGVTPDMYILGKALGGGVFPISCVAANRDILGVFEPGSHGSTFGGNPLACAVSIAALEVLEEEKLTERSLQLGEKLVGQLKEIDNPMITEVRGKGLFIGIELNEPARPYCEQLKAAGLLCKETHENVIRIAPPLVISEEDLEWAFQKIKAVLS.

K255 bears the N6-(pyridoxal phosphate)lysine mark.

The protein belongs to the class-III pyridoxal-phosphate-dependent aminotransferase family. OAT subfamily. Pyridoxal 5'-phosphate serves as cofactor.

The protein localises to the cytoplasm. The catalysed reaction is a 2-oxocarboxylate + L-ornithine = L-glutamate 5-semialdehyde + an L-alpha-amino acid. The protein operates within amino-acid biosynthesis; L-proline biosynthesis; L-glutamate 5-semialdehyde from L-ornithine: step 1/1. In terms of biological role, catalyzes the interconversion of ornithine to glutamate semialdehyde. This is Ornithine aminotransferase from Bacillus cereus (strain Q1).